The chain runs to 864 residues: Mitochondrial 15S rRNA processing factor CCM1 (864 aa).

The N-terminal 76 residues, 1–76 (MYMARCGPKN…REFSNTLKER (76 aa)), are a transit peptide targeting the mitochondrion. 2 stretches are compositionally biased toward polar residues: residues 80-94 (TKSV…NSIA) and 102-112 (NVNVTKTSSVP). Residues 80–117 (TKSVNSDGHQSNSIAPISEDSRNVNVTKTSSVPNEEKS) form a disordered region. 2 PPR repeats span residues 319-353 (NKQN…STKH) and 356-390 (DICT…NIKP).

The protein belongs to the CCM1 family. In terms of assembly, binds to mitochondrial small subunit 15S rRNA.

Its subcellular location is the mitochondrion. Functionally, regulates mitochondrial small subunit maturation by controlling 15S rRNA 5'-end processing. Localizes to the 5' precursor of the 15S rRNA in a position that is subsequently occupied by mS47 in the mature yeast mtSSU. Uses structure and sequence-specific RNA recognition, binding to a single-stranded region of the precursor and specifically recognizing bases -6 to -1. The exchange of Ccm1 for mS47 is coupled to the irreversible removal of precursor rRNA that is accompanied by conformational changes of the mitoribosomal proteins uS5m and mS26. These conformational changes signal completion of 5'-end rRNA processing through protection of the mature 5'-end of the 15S rRNA and stabilization of mS47. The removal of the 5' precursor together with the dissociation of Ccm1 may be catalyzed by the 5'-3' exoribonuclease Pet127. Involved in the specific removal of group I introns in mitochondrial encoded transcripts. The polypeptide is Mitochondrial 15S rRNA processing factor CCM1 (Saccharomyces cerevisiae (strain ATCC 204508 / S288c) (Baker's yeast)).